The sequence spans 126 residues: Fluoride-specific ion channel FluC (126 aa).

Helical transmembrane passes span 5–25 (ILVA…GAGV), 37–57 (VAIM…VVWA), 65–85 (LSPF…AFSL), and 101–121 (LYVA…LWVA). Residues glycine 75 and threonine 78 each coordinate Na(+).

Belongs to the fluoride channel Fluc/FEX (TC 1.A.43) family.

It is found in the cell inner membrane. It carries out the reaction fluoride(in) = fluoride(out). Na(+) is not transported, but it plays an essential structural role and its presence is essential for fluoride channel function. Fluoride-specific ion channel. Important for reducing fluoride concentration in the cell, thus reducing its toxicity. The sequence is that of Fluoride-specific ion channel FluC from Roseobacter denitrificans (strain ATCC 33942 / OCh 114) (Erythrobacter sp. (strain OCh 114)).